The following is a 128-amino-acid chain: Iron-sulfur cluster insertion protein ErpA 1 (128 aa).

Residues C47, C111, and C113 each coordinate iron-sulfur cluster.

It belongs to the HesB/IscA family. As to quaternary structure, homodimer. Requires iron-sulfur cluster as cofactor.

Its function is as follows. Required for insertion of 4Fe-4S clusters for at least IspG. The sequence is that of Iron-sulfur cluster insertion protein ErpA 1 from Methylococcus capsulatus (strain ATCC 33009 / NCIMB 11132 / Bath).